The chain runs to 338 residues: tRNA N6-adenosine threonylcarbamoyltransferase (338 aa).

Histidine 111 and histidine 115 together coordinate Fe cation. Substrate is bound by residues 134-138 (LVSGG), aspartate 167, glycine 180, and asparagine 272. Aspartate 300 is a binding site for Fe cation.

This sequence belongs to the KAE1 / TsaD family. The cofactor is Fe(2+).

The protein localises to the cytoplasm. It catalyses the reaction L-threonylcarbamoyladenylate + adenosine(37) in tRNA = N(6)-L-threonylcarbamoyladenosine(37) in tRNA + AMP + H(+). In terms of biological role, required for the formation of a threonylcarbamoyl group on adenosine at position 37 (t(6)A37) in tRNAs that read codons beginning with adenine. Is involved in the transfer of the threonylcarbamoyl moiety of threonylcarbamoyl-AMP (TC-AMP) to the N6 group of A37, together with TsaE and TsaB. TsaD likely plays a direct catalytic role in this reaction. This chain is tRNA N6-adenosine threonylcarbamoyltransferase, found in Shewanella sp. (strain ANA-3).